A 1368-amino-acid chain; its full sequence is DNA-directed RNA polymerase subunit beta (1368 aa).

It belongs to the RNA polymerase beta chain family. The RNAP catalytic core consists of 2 alpha, 1 beta, 1 beta' and 1 omega subunit. When a sigma factor is associated with the core the holoenzyme is formed, which can initiate transcription.

It catalyses the reaction RNA(n) + a ribonucleoside 5'-triphosphate = RNA(n+1) + diphosphate. In terms of biological role, DNA-dependent RNA polymerase catalyzes the transcription of DNA into RNA using the four ribonucleoside triphosphates as substrates. The chain is DNA-directed RNA polymerase subunit beta from Burkholderia mallei (strain SAVP1).